A 126-amino-acid chain; its full sequence is Glycine cleavage system H protein (126 aa).

A Lipoyl-binding domain is found at 19 to 100 (DGKIGITDHA…AHAAWMVKVE (82 aa)). Residue Lys-60 is modified to N6-lipoyllysine.

Belongs to the GcvH family. As to quaternary structure, the glycine cleavage system is composed of four proteins: P, T, L and H. (R)-lipoate serves as cofactor.

The glycine cleavage system catalyzes the degradation of glycine. The H protein shuttles the methylamine group of glycine from the P protein to the T protein. In Koribacter versatilis (strain Ellin345), this protein is Glycine cleavage system H protein.